The primary structure comprises 292 residues: NAD-dependent protein deacetylase sir-2.4 (292 aa).

In terms of domain architecture, Deacetylase sirtuin-type spans 31-292 (IEKLRTLYNH…DEVPIPLKIS (262 aa)). NAD(+) contacts are provided by residues 56–75 (GAGV…QGVW) and 116–119 (QNVD). His136 functions as the Proton acceptor in the catalytic mechanism. Positions 144, 147, 163, and 169 each coordinate Zn(2+). Residues 216–218 (GTS), 242–244 (NYQ), and Val260 contribute to the NAD(+) site.

This sequence belongs to the sirtuin family. Class IV subfamily. Requires Zn(2+) as cofactor.

The catalysed reaction is N(6)-acetyl-L-lysyl-[protein] + NAD(+) + H2O = 2''-O-acetyl-ADP-D-ribose + nicotinamide + L-lysyl-[protein]. Its function is as follows. NAD-dependent protein deacetylase. The protein is NAD-dependent protein deacetylase sir-2.4 (sir-2.4) of Caenorhabditis elegans.